The following is a 552-amino-acid chain: Esterase E4 (552 aa).

A signal peptide spans 1 to 23; that stretch reads MKNTCGILLNLFLFIGCFLTCSA. The N-linked (GlcNAc...) asparagine glycan is linked to Asn81. An intrachain disulfide couples Cys89 to Cys106. The Acyl-ester intermediate role is filled by Ser214. A disulfide bridge links Cys266 with Cys277. Asn269 carries an N-linked (GlcNAc...) asparagine glycan. Glu339 (charge relay system) is an active-site residue. N-linked (GlcNAc...) asparagine glycans are attached at residues Asn371, Asn404, and Asn443. Catalysis depends on His463, which acts as the Charge relay system.

Belongs to the type-B carboxylesterase/lipase family.

It catalyses the reaction a carboxylic ester + H2O = an alcohol + a carboxylate + H(+). Its function is as follows. Overproduction of nonspecific esterases is a common mechanism of resistance to organophosphate insecticides. This chain is Esterase E4, found in Myzus persicae (Green peach aphid).